A 519-amino-acid polypeptide reads, in one-letter code: Cyclic AMP-responsive element-binding protein 3-like protein 2 (519 aa).

Residues 1–374 lie on the Cytoplasmic side of the membrane; sequence MEIMDSGEPF…SCRVTGTQTS (374 aa). Disordered regions lie at residues 58–77, 85–121, and 193–261; these read GRGD…PVPP, YSLC…MEQE, and GLEC…SGPL. Residues 109 to 119 are compositionally biased toward acidic residues; the sequence is ADSESDEWPME. Composition is skewed to low complexity over residues 205–217 and 240–249; these read SSVG…SQSP and PSSLSSSPLL. The bZIP domain maps to 291 to 354; sequence ALKKIRRKIK…KSLLQQLHSL (64 aa). Positions 293 to 322 are basic motif; it reads KKIRRKIKNKISAQESRRKKKEYVDALEKK. Positions 333–354 are leucine-zipper; that stretch reads LRRKVENLECTNKSLLQQLHSL. Residues 375 to 395 traverse the membrane as a helical; Signal-anchor for type II membrane protein segment; the sequence is TCLMVVVLCFSLFLGSFYPGL. Residues 396 to 519 lie on the Lumenal side of the membrane; sequence SPCSSITKAD…QLDRTVNETS (124 aa). Positions 423–426 match the S1P recognition motif; it reads RSLL. Asn-485, Asn-503, and Asn-516 each carry an N-linked (GlcNAc...) asparagine glycan.

The protein belongs to the bZIP family. ATF subfamily. In terms of assembly, binds DNA as a dimer. Post-translationally, upon ER stress, translocated to the Golgi apparatus, where it is processed by regulated intramembrane proteolysis (RIP) to release the cytosol-facing N-terminal transcription factor domain. The cleavage is performed sequentially by site-1 and site-2 proteases (S1P/mbtps1 and S2P/mbtps2).

The protein localises to the endoplasmic reticulum membrane. It localises to the nucleus. Transcription factor involved in unfolded protein response (UPR). In the absence of endoplasmic reticulum (ER) stress, inserted into ER membranes, with N-terminal DNA-binding and transcription activation domains oriented toward the cytosolic face of the membrane. In response to ER stress, transported to the Golgi, where it is cleaved in a site-specific manner by resident proteases S1P/mbtps1 and S2P/mbtps2. The released N-terminal cytosolic domain is translocated to the nucleus to effect transcription of specific target genes. Plays a critical role in chondrogenesis. May protect neuroblastoma cells from ER stress-induced death. In vitro activates transcription of target genes via direct binding to the CRE site. The sequence is that of Cyclic AMP-responsive element-binding protein 3-like protein 2 (creb3l2) from Danio rerio (Zebrafish).